A 185-amino-acid polypeptide reads, in one-letter code: Ribosome-recycling factor (185 aa).

This sequence belongs to the RRF family.

The protein localises to the cytoplasm. Its function is as follows. Responsible for the release of ribosomes from messenger RNA at the termination of protein biosynthesis. May increase the efficiency of translation by recycling ribosomes from one round of translation to another. This is Ribosome-recycling factor from Pseudomonas paraeruginosa (strain DSM 24068 / PA7) (Pseudomonas aeruginosa (strain PA7)).